The chain runs to 324 residues: Myoblast determination protein 1 homolog (324 aa).

The disordered stretch occupies residues 125-146; sequence VDSQHEDTTTSTAGGAGVGGPR. One can recognise a bHLH domain in the interval 155–206; the sequence is DRRKAATMRERRRLRKVNEAFEVVKQRTCPNPNQRLPKVEILRSAIDYINNL. A disordered region spans residues 251–272; the sequence is YNPENMFDDDDLTDSDDDRDHH. Positions 256-267 are enriched in acidic residues; that stretch reads MFDDDDLTDSDD.

As to quaternary structure, efficient DNA binding requires dimerization with another bHLH protein. In terms of tissue distribution, body wall muscle cells; in clonal muscle precursors, in a set of early embryonic blastomeres (the ms-granddaughters), and in six glial-like cells called GLRS.

The protein localises to the nucleus. Involved in myogenesis, in cooperation with transcription factors unc-120 and hnd-1. Acts redundantly with fozi-1 to promote body wall muscle cell and coelomocyte specification in postembryonic mesoderm progenitors, probably through suppression of sem-2. The chain is Myoblast determination protein 1 homolog from Caenorhabditis elegans.